The primary structure comprises 566 residues: Proline--tRNA ligase (566 aa).

Belongs to the class-II aminoacyl-tRNA synthetase family. ProS type 1 subfamily. Homodimer.

The protein localises to the cytoplasm. The enzyme catalyses tRNA(Pro) + L-proline + ATP = L-prolyl-tRNA(Pro) + AMP + diphosphate. In terms of biological role, catalyzes the attachment of proline to tRNA(Pro) in a two-step reaction: proline is first activated by ATP to form Pro-AMP and then transferred to the acceptor end of tRNA(Pro). As ProRS can inadvertently accommodate and process non-cognate amino acids such as alanine and cysteine, to avoid such errors it has two additional distinct editing activities against alanine. One activity is designated as 'pretransfer' editing and involves the tRNA(Pro)-independent hydrolysis of activated Ala-AMP. The other activity is designated 'posttransfer' editing and involves deacylation of mischarged Ala-tRNA(Pro). The misacylated Cys-tRNA(Pro) is not edited by ProRS. The chain is Proline--tRNA ligase from Coxiella burnetii (strain RSA 493 / Nine Mile phase I).